Consider the following 282-residue polypeptide: D-alanine aminotransferase (282 aa).

Residue Tyr-32 participates in substrate binding. Residue Arg-51 participates in pyridoxal 5'-phosphate binding. Arg-99 and His-101 together coordinate substrate. Lys-146 acts as the Proton acceptor in catalysis. At Lys-146 the chain carries N6-(pyridoxal phosphate)lysine. Glu-178 is a pyridoxal 5'-phosphate binding site.

It belongs to the class-IV pyridoxal-phosphate-dependent aminotransferase family. In terms of assembly, homodimer. Pyridoxal 5'-phosphate serves as cofactor.

The catalysed reaction is D-alanine + 2-oxoglutarate = D-glutamate + pyruvate. Acts on the D-isomers of alanine, leucine, aspartate, glutamate, aminobutyrate, norvaline and asparagine. The enzyme transfers an amino group from a substrate D-amino acid to the pyridoxal phosphate cofactor to form pyridoxamine and an alpha-keto acid in the first half-reaction. The second half-reaction is the reverse of the first, transferring the amino group from the pyridoxamine to a second alpha-keto acid to form the product D-amino acid via a ping-pong mechanism. This is an important process in the formation of D-alanine and D-glutamate, which are essential bacterial cell wall components. This chain is D-alanine aminotransferase (dat), found in Staphylococcus aureus (strain COL).